We begin with the raw amino-acid sequence, 218 residues long: Peptidyl-tRNA hydrolase (218 aa).

A tRNA-binding site is contributed by Tyr-19. The active-site Proton acceptor is the His-24. Residues Tyr-68, Asn-70, and Asn-116 each contribute to the tRNA site. The tract at residues 181-218 is disordered; that stretch reads WNTATQRLNARPAPPKPPKAPKAPQPAAADQPKDESQP. The segment covering 192-204 has biased composition (pro residues); the sequence is PAPPKPPKAPKAP.

It belongs to the PTH family. Monomer.

It is found in the cytoplasm. It carries out the reaction an N-acyl-L-alpha-aminoacyl-tRNA + H2O = an N-acyl-L-amino acid + a tRNA + H(+). Hydrolyzes ribosome-free peptidyl-tRNAs (with 1 or more amino acids incorporated), which drop off the ribosome during protein synthesis, or as a result of ribosome stalling. Functionally, catalyzes the release of premature peptidyl moieties from peptidyl-tRNA molecules trapped in stalled 50S ribosomal subunits, and thus maintains levels of free tRNAs and 50S ribosomes. This Azoarcus sp. (strain BH72) protein is Peptidyl-tRNA hydrolase.